A 45-amino-acid chain; its full sequence is Omega-hexatoxin-Hv2a (45 aa).

3 disulfide bridges follow: Cys-4-Cys-18, Cys-11-Cys-24, and Cys-17-Cys-29.

It belongs to the neurotoxin 15 family. 02 (omega-actx) subfamily. As to expression, expressed by the venom gland.

The protein resides in the secreted. In terms of biological role, potent inhibitor of insect (bee brain), but not mammalian (rat trigeminal neurons), voltage-gated calcium channels (Cav). In vivo, injection into lone star ticks (Amblyomma americanum) induces curling of all eight legs into closed loops, followed by death. The polypeptide is Omega-hexatoxin-Hv2a (Hadronyche versuta (Blue mountains funnel-web spider)).